We begin with the raw amino-acid sequence, 83 residues long: Putative cytochrome b5 B11H24.095 (83 aa).

The Cytochrome b5 heme-binding domain maps to 2–78 (SQTFTKSQVA…GTKLKVGTLA (77 aa)). H37 and H60 together coordinate heme.

This sequence belongs to the cytochrome b5 family.

The sequence is that of Putative cytochrome b5 B11H24.095 from Neurospora crassa (strain ATCC 24698 / 74-OR23-1A / CBS 708.71 / DSM 1257 / FGSC 987).